Reading from the N-terminus, the 991-residue chain is Receptor-like protein kinase HAIKU2 (991 aa).

A signal peptide spans 1-19; the sequence is MLRLLFIVRLLFLMPLASS. Residues 20–616 lie on the Extracellular side of the membrane; sequence RSNHSEEVEN…KRKHLSKVDM (597 aa). A glycan (N-linked (GlcNAc...) asparagine) is linked at N22. LRR repeat units follow at residues 66–90, 99–123, 125–148, 150–170, 171–196, 197–220, 221–244, 246–267, 269–291, 292–314, 315–339, 341–363, 365–387, 388–411, 413–435, 436–459, 461–482, 483–508, 510–531, 532–554, and 555–578; these read DGNV…RFTD, LKLL…LGKC, RLRY…SLQL, EFLS…SLKD, LKRL…ILNL, TALQ…IKNL, VRLQ…IVQL, NLRQ…GFRN, TNLR…LRFL, KNLV…EFGD, FKSL…LGSW, AFKY…MCKK, VMTH…YAKC, KTLI…IWGL, NLQF…IGNA, KSLG…ISGA, SLVS…SFGK, LKEL…GLCT, LVDL…LGSL, KLLN…GLSA, and LKLS…LVSG. N109, N135, N155, N195, and N206 each carry an N-linked (GlcNAc...) asparagine glycan. N267 and N278 each carry an N-linked (GlcNAc...) asparagine glycan. N-linked (GlcNAc...) asparagine glycans are attached at residues N397 and N427. N495 carries an N-linked (GlcNAc...) asparagine glycan. N538 carries an N-linked (GlcNAc...) asparagine glycan. A helical membrane pass occupies residues 617-637; that stretch reads CFIVAAILALFFLFSYVIFKI. The Cytoplasmic portion of the chain corresponds to 638–991; it reads RRDKLNKTVQ…SANDEITKVV (354 aa). The region spanning 671 to 970 is the Protein kinase domain; that stretch reads IKSENIIGRG…SMLEKIEPSY (300 aa). Residues 677-685 and K699 each bind ATP; that span reads IGRGGQGNV. A phosphotyrosine mark is found at Y762 and Y801. D814 functions as the Proton acceptor in the catalytic mechanism. Residues Y859 and Y866 each carry the phosphotyrosine modification. Residue T867 is modified to Phosphothreonine. The tract at residues 972 to 991 is disordered; the sequence is KNSGEASYGESANDEITKVV.

Belongs to the protein kinase superfamily. Ser/Thr protein kinase family. As to expression, expressed in the endosperm of fertilized ovules.

It localises to the membrane. It catalyses the reaction L-seryl-[protein] + ATP = O-phospho-L-seryl-[protein] + ADP + H(+). The catalysed reaction is L-threonyl-[protein] + ATP = O-phospho-L-threonyl-[protein] + ADP + H(+). Its function is as follows. Modulates the seed size by negatively regulating the cellularization of syncytial endosperm. The protein is Receptor-like protein kinase HAIKU2 (IKU2) of Arabidopsis thaliana (Mouse-ear cress).